The chain runs to 268 residues: Mediator of RNA polymerase II transcription subunit 8-A (268 aa).

Coiled coils occupy residues 1-26 (MQRE…KNSL) and 117-160 (VEEL…EERE). Positions 190-268 (GLSNRRPPGQ…KSASMHPYQR (79 aa)) are disordered. Over residues 223–246 (VPMSLQSNQQQQHMAGVSMSQGNQ) the composition is skewed to polar residues.

The protein belongs to the Mediator complex subunit 8 family. As to quaternary structure, component of the Mediator complex. May be part of a multisubunit E3 ubiquitin-protein ligase complex.

The protein localises to the nucleus. The protein operates within protein modification; protein ubiquitination. Functionally, component of the Mediator complex, a coactivator involved in the regulated transcription of nearly all RNA polymerase II-dependent genes. Mediator functions as a bridge to convey information from gene-specific regulatory proteins to the basal RNA polymerase II transcription machinery. Mediator is recruited to promoters by direct interactions with regulatory proteins and serves as a scaffold for the assembly of a functional preinitiation complex with RNA polymerase II and the general transcription factors. May play a role as a target recruitment subunit in E3 ubiquitin-protein ligase complexes and thus in ubiquitination and subsequent proteasomal degradation of target proteins. The protein is Mediator of RNA polymerase II transcription subunit 8-A (med8-a) of Xenopus laevis (African clawed frog).